The primary structure comprises 414 residues: Glutamyl-tRNA reductase (414 aa).

Substrate is bound by residues 49 to 52, Ser-108, 113 to 115, and Gln-119; these read TCNR and EPQ. The active-site Nucleophile is Cys-50. 188–193 provides a ligand contact to NADP(+); that stretch reads GAGQTG.

It belongs to the glutamyl-tRNA reductase family. As to quaternary structure, homodimer.

The catalysed reaction is (S)-4-amino-5-oxopentanoate + tRNA(Glu) + NADP(+) = L-glutamyl-tRNA(Glu) + NADPH + H(+). It participates in porphyrin-containing compound metabolism; protoporphyrin-IX biosynthesis; 5-aminolevulinate from L-glutamyl-tRNA(Glu): step 1/2. Its function is as follows. Catalyzes the NADPH-dependent reduction of glutamyl-tRNA(Glu) to glutamate 1-semialdehyde (GSA). This chain is Glutamyl-tRNA reductase, found in Francisella tularensis subsp. novicida (strain U112).